The sequence spans 257 residues: Imidazole glycerol phosphate synthase subunit HisF (257 aa).

Catalysis depends on residues aspartate 11 and aspartate 130.

This sequence belongs to the HisA/HisF family. In terms of assembly, heterodimer of HisH and HisF.

Its subcellular location is the cytoplasm. It catalyses the reaction 5-[(5-phospho-1-deoxy-D-ribulos-1-ylimino)methylamino]-1-(5-phospho-beta-D-ribosyl)imidazole-4-carboxamide + L-glutamine = D-erythro-1-(imidazol-4-yl)glycerol 3-phosphate + 5-amino-1-(5-phospho-beta-D-ribosyl)imidazole-4-carboxamide + L-glutamate + H(+). The protein operates within amino-acid biosynthesis; L-histidine biosynthesis; L-histidine from 5-phospho-alpha-D-ribose 1-diphosphate: step 5/9. Functionally, IGPS catalyzes the conversion of PRFAR and glutamine to IGP, AICAR and glutamate. The HisF subunit catalyzes the cyclization activity that produces IGP and AICAR from PRFAR using the ammonia provided by the HisH subunit. This chain is Imidazole glycerol phosphate synthase subunit HisF, found in Pseudoalteromonas atlantica (strain T6c / ATCC BAA-1087).